A 66-amino-acid polypeptide reads, in one-letter code: Large ribosomal subunit protein uL29 (66 aa).

This sequence belongs to the universal ribosomal protein uL29 family.

In Geobacillus thermodenitrificans (strain NG80-2), this protein is Large ribosomal subunit protein uL29.